The following is a 257-amino-acid chain: Na(+)-translocating NADH-quinone reductase subunit C (257 aa).

The chain crosses the membrane as a helical span at residues 12-32 (LFVVIALSLVCSIIVSAAAVG). Thr225 is modified (FMN phosphoryl threonine).

This sequence belongs to the NqrC family. As to quaternary structure, composed of six subunits; NqrA, NqrB, NqrC, NqrD, NqrE and NqrF. The cofactor is FMN.

It is found in the cell inner membrane. It carries out the reaction a ubiquinone + n Na(+)(in) + NADH + H(+) = a ubiquinol + n Na(+)(out) + NAD(+). In terms of biological role, NQR complex catalyzes the reduction of ubiquinone-1 to ubiquinol by two successive reactions, coupled with the transport of Na(+) ions from the cytoplasm to the periplasm. NqrA to NqrE are probably involved in the second step, the conversion of ubisemiquinone to ubiquinol. In Vibrio cholerae serotype O1 (strain ATCC 39541 / Classical Ogawa 395 / O395), this protein is Na(+)-translocating NADH-quinone reductase subunit C.